Reading from the N-terminus, the 283-residue chain is Homeobox protein Hox-C12b (283 aa).

The homeobox DNA-binding region spans 215-274; it reads TRKKRKPYSKLQLNELEGEFILNEFITRQRRRELSDRLNLTDQQVKIWFQNRRMKKKRLL.

Belongs to the Abd-B homeobox family.

The protein resides in the nucleus. In terms of biological role, sequence-specific transcription factor which is part of a developmental regulatory system that provides cells with specific positional identities on the anterior-posterior axis. This chain is Homeobox protein Hox-C12b (hoxc12b), found in Danio rerio (Zebrafish).